A 275-amino-acid polypeptide reads, in one-letter code: MSVQSAIRRRTAPDIRARKNGDPIVMLTSYHAHTAALVDRHCDVILVGDSLGNVMHGFETTVPVTLDMMILQGRAVMRGSQQALVVVDMPFGSYEASKEQAFHSAARILKETLCGAVKLEGGVKMAETIAFLTARGVPVMGHVGLTPQSINTLGSFRAQGREEGTWRPIEDDARAVAEAGAFSMVIEAVAEPLARKITESVAIPTIGIGASPACDGQVLVLEDMLGLSPRAPKFVRRYGELGPMIEAAIEGYARDVRSRAFPGPEHVYAMKPKAS.

Residues aspartate 49 and aspartate 88 each coordinate Mg(2+). Residues 49 to 50 (DS), aspartate 88, and lysine 118 contribute to the 3-methyl-2-oxobutanoate site. Position 120 (glutamate 120) interacts with Mg(2+). Residue glutamate 187 is the Proton acceptor of the active site.

Belongs to the PanB family. Homodecamer; pentamer of dimers. Mg(2+) is required as a cofactor.

It is found in the cytoplasm. The enzyme catalyses 3-methyl-2-oxobutanoate + (6R)-5,10-methylene-5,6,7,8-tetrahydrofolate + H2O = 2-dehydropantoate + (6S)-5,6,7,8-tetrahydrofolate. The protein operates within cofactor biosynthesis; (R)-pantothenate biosynthesis; (R)-pantoate from 3-methyl-2-oxobutanoate: step 1/2. In terms of biological role, catalyzes the reversible reaction in which hydroxymethyl group from 5,10-methylenetetrahydrofolate is transferred onto alpha-ketoisovalerate to form ketopantoate. The chain is 3-methyl-2-oxobutanoate hydroxymethyltransferase from Nitrobacter hamburgensis (strain DSM 10229 / NCIMB 13809 / X14).